The primary structure comprises 3431 residues: MASERPEPEVEEAGQVFLLMKKDYRISRNVRLAWFLNHLHQTVQATPQELLLQSEQELEVLSVLPPGWQPDEPVVPRPFLLVPSTRVTFLAWQYRFVIELDLSPSTGIVDDSTGEILFDEVFHALSRCLGGLLRPFRVPGSCINFQPEIYVTIQAYSSIIGLQSHQVLVQGCLLDPSQREAFLQQVYEQLCLFEDKVATMLQQQYEPQGQAEDQSPESGESLGRKVGVSMVTADLGLVSMIRQGILALQLLPSNSSAGIIVITDGVTSVPDVAVCETLLNQLRSGTVACSFVQVGGVYSYDCSFGHVPNVELMKFIAMATFGSYLSTCPETEPGNLGLTVYHRAFLLYSFLRSGEALNPEYYCGSQHRLFNEHLVSASSNPALALRRKKHTEKEVPADLVSTVSVRLREGYSVREVTLAKGGSQLEVKLVLLWKHNMRIEYVAVAPWPLEPEGPRGTRVEVTMEGGYDILHDVSCALRQPIRSLYRTHVIRRFWNTLQSINQTDQMLAHLQSFSSVPEHFTLPDSTKSGVPLFYIPPGSSTPVLSLQHSGSDSSHAQFAAYWKPVLSMDANSWQRWLHMHRLVLILEHDTPLPKHLHTPGSNGRYSTIQCRISHSSLTSLLRDWSSFVLVEGYSYVKLLSSAPDQPPSSFYMVRIISKTPCMVLRLGFPIGTPAQARHKIVSGLKEEILRLRFPHRVQSKEPTPKVKRKGLGGVGGSSPSKSPPTLGPQQALSDRPCLVVLHKPLDKLLIRYEKLPLDYRAPFLLTLEPPGPLPLVSGRSASSSLASLSRYLYHRRWLWSVPSGLAPTLPLSATAQLLSVLTEVRLSEGFHFACSGEGIINMVLELPVQNEPLGQAAAEEKHTCVVQYILFPPHSTSTKDSFSTDDDNDVEVEALEGDSELNLVTEVWVEPQYGRVGPGPENWKHLQDLTYSEIPQALHPRDAACIGSLLTFEYLIQLCQSKEWGPLPPEPRLSDGLDQRGDTCVHEIPFHFDLLGLLPQCQQLQMFFLLLSREPEGVPLAEGPCPTNDMVLCLLHSCLGQELSDREIPLTPADQAAFLNEVLRRSLRDPGPEGPPVGGHAVAKDRAGNSTQASGDSTLPSQSVVIPGVLRSSISAQPPQWHCYARLLGPQHVFLTFLPATFSDVQHLTAYGLESSFQEETKPKLGDWSGAPSLKDPGATGTKATESQVPTLSVTLASDSAQDSGEPSTPSCQDLAANSGRQAPQTEGADGPRTRCPVYIYSCSLEALREQMVGLQPPQAPRDLIFRAQDLDHPSSSSAWMEPRCKEAATHCALLQEHAQRCFVRGLFRSLQQAQSVTCQDLLTAVDACEELLQEIDITSFLLALCGHTWGLPHAPPSPGPLSPGPFSSSIEEGPEPRERAILVSESSIETEDLSEPEFQSSRVSGNLDPGPEISLTDVCQLRGEAHDALHSLIQEKFLEISRLHFRTVPSNPHYFFYCPPSSRREDEGPRDTVDRKISDLEFSEAELVGEEGDTSACCVVTESDPELEVEYRESREPDLGPAGLDSASLSDADTVNPDEDSFSILGGDSPTGPDSLMHDLPPLFLHLTCSVRLRGQHSSVPVCSLPTCLGQVLSSLEGPPIGGRVPLRDLSITLDVFVLTLPLEVELPPASDPQHHRSTSESSASFPRSPGQPSSLRSDDGLGPPLPPPEEERHPGLSSLAMPHRLAIESTMNEIRWLLEDEMVGALRRGGIPQSPALHRAAAHIHSSSGRPTCLRQAPPLSFVFGPERSLTQFKEEFRRLHLPGHVLLEDPDSGFFFVAAGQQPGVLHGEPPSAAWAWHNHEDRAEDAEGEVLTASPQVPGSLEDSEGTPLISLPSLSQGGSQPGPSRGLSLMSSQGSVDSDHLGYDGGSSGSDSEGPGETLGEKALFTLRTPPGPAPPQPSLPVLPGPSLPDFWLIVRILQDRVEVYAHARSLSREDGGPGAECRHLQQFLVRRVGEICREVNQRLLLQDLHDSHVCNSLLVAESEEDLWRSETPFHSRQRAVLPSDDFAADESCAPRGYLAATMQFVPGHFSCDVVWGTVIRVHSRLKMGPSMGVSRAIQALRSVLNAFSVVNRKNMFVYQERATKAVYYLRLLETSCSDRPWEGDTLPPSLALSRSQEPISSEDSVAPRSPLDMASSRSSDAVRPVGQVDRHIQLLVHGVGQAGPEITDELVRVLRRRLDEATLDIITVMLVRNCKLTPADVEFIQPPGSLPSEVLHLVLPPSCRPCLPALAWYLRQNLLTFLHSPKYTDSNSRNHFQHPLPAQGGLPDLDIYLYNKPGGQGTGGKGVACITLAFVEEGGTPISLASWPPSSPGPPDPLREEEFEQLTQVIRCPNTLDSCSAQDGSPRLRLDVWEKGNISIVQLEEKLRAAARQALADAIMELRLLPASLCTEDIPPGSLKSGPLDTKSPACRANTFPCTPVSGEPVTPPSKAGRRSFWDMLSKTEAGDLGSPKTTDDIVLDRPEDTRGRRRHKTENVRTPGGSERAPGPDSGAQRQRRRTTQLEEGEVGTLHPVFARVIQRWMGFMVQIGCASVSRSSTHMVSRFLLPSILSEFTTLVISMAGDTSVRVFEQHLGSEPDVFSPCSPGQLGPAPRPAAQRHLLLLGRNFAQWRRPTQQAAKAVQRFESGGDGSPGRSAPRQRLLLLEVTDKKLQLLTYNWAPDLGAALGRALIRLVQWQNARAHLISCLLSQKLGLFHHCGQLDFPMRDGKEPNPFLLPTMEVETLIRNASPPLSREQGRLSGSSRGGGPLSLDTFPFDEALRDITAARPSSTGGPAPRPPDPVTYHGQQFLEIKMTERKELERQMKMENLFVTWQQRSAPASMPISAGELETLKQSSRLVHYCATALLFDPAAWLHGPPETCAPSEGQRRPCPESGSGSREVPTSCESLDVPPPGAREEPWLKELSLAFLQQYVQYLQSIGFVLVPLRPPSPARSTSRLRAMAILGTEGRGSFSCPKAKAEGSPKSTSTPVTTYHLQRALPGGIILMELTFQGCYFCVKQFALECSRIPMGQAVNSQLSLLFTEECDKVRDLMHVHSFSYDFHLRLVHQHVLGAHLALRHGYHLTTFLQHFLAHHPDGPHFGRNHIYQGTLELPTPLIAAHQLYNYVADHASSYHMKPLRMARPGGPEHNEYALVSAWHSSGSYLDSEGLRHQDDFDVSLLVCHSAAPFEEQGEAERHVLRLQFFVVLTSQRELFPRLTADMRRFRKPSRLPLEPETPGSLVGSPREASGMMLAPGPAPLFPPLAAEVGMARARLAQLVRLAGGHCRRDTLWKRLFLLEPPGPDRLRLGGRLALAELEELLEAVHAKSIADIDPQLDCFLSMTVSWYQSLIKVLLSRFPQSCRHFQSPDLGTQYLVVLNQKFTDCFVLVFLDSHLGKTSLTVVFREPFPVQPQDSESPPAQLVSTYHHLESVINTACFTLWTRLL.

3 disordered regions span residues 699 to 731 (SKEP…PQQA), 1067 to 1101 (LRDP…TLPS), and 1162 to 1231 (KPKL…GADG). The segment at 1082-1188 (VAKDRAGNST…ATGTKATESQ (107 aa)) is mediates interaction with the GATOR1 complex. Polar residues-rich tracts occupy residues 1088 to 1101 (GNST…TLPS) and 1182 to 1212 (TKAT…TPSC). A Phosphoserine modification is found at Ser-1275. The segment at 1356–1378 (PPSPGPLSPGPFSSSIEEGPEPR) is disordered. Phosphoserine is present on Ser-1415. 7 disordered regions span residues 1512-1534 (YRES…SDAD), 1629-1678 (PPAS…HPGL), 1806-1883 (RAED…PGET), 2113-2148 (PPSL…SDAV), 2450-2512 (TEAG…LEEG), 2735-2756 (ASPP…GGPL), and 2866-2899 (ETCA…DVPP). Position 1640 is a phosphothreonine (Thr-1640). A compositionally biased stretch (polar residues) spans 1641–1657 (SESSASFPRSPGQPSSL). The residue at position 1650 (Ser-1650) is a Phosphoserine. Low complexity predominate over residues 1832–1854 (PLISLPSLSQGGSQPGPSRGLSL). The segment covering 2118 to 2129 (LSRSQEPISSED) has biased composition (polar residues). The segment covering 2460 to 2473 (TTDDIVLDRPEDTR) has biased composition (basic and acidic residues). Low complexity predominate over residues 2739-2749 (LSREQGRLSGS).

Part of the KICSTOR complex composed of KPTN, ITFG2, KICS2 and SZT2. SZT2 probably serves as a link between the other three proteins in the KICSTOR complex and may mediate the direct interaction with the GATOR complex via GATOR1. The KICSTOR complex interacts directly with the GATOR1 complex and most probably indirectly with the GATOR2 complex in an amino acid-independent manner. In terms of tissue distribution, mostly expressed in brain, spinal cord and lung.

The protein resides in the lysosome membrane. Its subcellular location is the peroxisome. Its function is as follows. As part of the KICSTOR complex functions in the amino acid-sensing branch of the TORC1 signaling pathway. Recruits, in an amino acid-independent manner, the GATOR1 complex to the lysosomal membranes and allows its interaction with GATOR2 and the RAG GTPases. Functions upstream of the RAG GTPases and is required to negatively regulate mTORC1 signaling in absence of amino acids. In absence of the KICSTOR complex mTORC1 is constitutively localized to the lysosome and activated. The KICSTOR complex is also probably involved in the regulation of mTORC1 by glucose. May play a role in the cellular response to oxidative stress. The polypeptide is KICSTOR complex protein SZT2 (Mus musculus (Mouse)).